The primary structure comprises 50 residues: Mast cell degranulating peptide (50 aa).

An N-terminal signal peptide occupies residues 1 to 27; that stretch reads MISMLRCTFFFLSVILITSYFVTPTMS. The residue at position 29 (K29) is an N6-formyllysine; partial. Disulfide bonds link C30–C42 and C32–C46. K44 and K48 each carry N6-formyllysine; partial. Residue N49 is modified to Asparagine amide.

In terms of tissue distribution, expressed by the venom gland.

It localises to the secreted. Its function is as follows. Potent anti-inflammatory agent. At low concentrations, mediates the degranulation of mast cells thus evoking an inflammatory response. Also acts as a neurotoxin capable of blocking a class of voltage-gated potassium channels. In Apis mellifera (Honeybee), this protein is Mast cell degranulating peptide.